Reading from the N-terminus, the 457-residue chain is Cysteine--tRNA ligase (457 aa).

Position 27 (Cys-27) interacts with Zn(2+). The 'HIGH' region signature appears at 29–39 (PTVYDFAHIGN). Residues Cys-211, His-236, and Glu-240 each contribute to the Zn(2+) site. The short motif at 269–273 (KMSKS) is the 'KMSKS' region element. Residue Lys-272 coordinates ATP.

Belongs to the class-I aminoacyl-tRNA synthetase family. Monomer. Zn(2+) serves as cofactor.

Its subcellular location is the cytoplasm. The enzyme catalyses tRNA(Cys) + L-cysteine + ATP = L-cysteinyl-tRNA(Cys) + AMP + diphosphate. In Ehrlichia ruminantium (strain Gardel), this protein is Cysteine--tRNA ligase.